Consider the following 252-residue polypeptide: Imidazole glycerol phosphate synthase subunit HisF (252 aa).

Residues aspartate 11 and aspartate 130 contribute to the active site.

Belongs to the HisA/HisF family. Heterodimer of HisH and HisF.

The protein resides in the cytoplasm. It carries out the reaction 5-[(5-phospho-1-deoxy-D-ribulos-1-ylimino)methylamino]-1-(5-phospho-beta-D-ribosyl)imidazole-4-carboxamide + L-glutamine = D-erythro-1-(imidazol-4-yl)glycerol 3-phosphate + 5-amino-1-(5-phospho-beta-D-ribosyl)imidazole-4-carboxamide + L-glutamate + H(+). It functions in the pathway amino-acid biosynthesis; L-histidine biosynthesis; L-histidine from 5-phospho-alpha-D-ribose 1-diphosphate: step 5/9. IGPS catalyzes the conversion of PRFAR and glutamine to IGP, AICAR and glutamate. The HisF subunit catalyzes the cyclization activity that produces IGP and AICAR from PRFAR using the ammonia provided by the HisH subunit. The protein is Imidazole glycerol phosphate synthase subunit HisF of Persephonella marina (strain DSM 14350 / EX-H1).